The sequence spans 534 residues: MNPDTFPWLSTLIFFPIMATVALPFIPDPKGKGDPIRWYALVIGLIDFVLLIYAFYTQYDFAESGLQMVEHYDWLPQLGVQWSVGADGLSMPLILLTGFITSLAILASWPVTYKPRLFYFLILAMYGGQIAVFAVQDLLVFFLVWELELVPVYLLLSIWGGYKRLYAATKFILYTAISSLFILVAALAMAFFGPDLTFDLQSLAAKDYPLTFQLLCYTGFLVAFAVKLPIVPLHTWLPDAHGEATAPVHMLLAGILLKMGGYALIRMNVELLPDAHAYFAPALIILGVVNIIYAALTSFAQRNLKRKIAYSSISHMGFVLIGIASFTDLGMSGAVLQMVSHGLIGASLFFLVGATYDRTHTLILEEMGGVAQNMPKIFAMFTTCSMASLALPGMSGFVAELMVFVGLATSDAYSLAFRVPVVILAGIGVILTPIYLLSMLREIFYGPENKELTSHEKLVDAEPREIFVIACLLVPIIGIGLYPKIITQIYDAKTTQLVAYIRPSVPSIAMREAATVASVSDIEMDSSYQAPAIK.

The next 14 membrane-spanning stretches (helical) occupy residues 6-26 (FPWL…LPFI), 38-58 (WYAL…FYTQ), 91-111 (MPLI…SWPV), 117-137 (LFYF…AVQD), 138-158 (LLVF…LLSI), 171-191 (FILY…AMAF), 214-234 (LLCY…VPLH), 245-265 (TAPV…YALI), 279-299 (FAPA…LTSF), 316-336 (MGFV…GAVL), 337-357 (QMVS…ATYD), 377-399 (IFAM…GFVA), 419-439 (VPVV…LLSM), and 466-486 (IFVI…PKII).

It belongs to the complex I subunit 4 family.

It localises to the cellular thylakoid membrane. The enzyme catalyses a plastoquinone + NADH + (n+1) H(+)(in) = a plastoquinol + NAD(+) + n H(+)(out). It catalyses the reaction a plastoquinone + NADPH + (n+1) H(+)(in) = a plastoquinol + NADP(+) + n H(+)(out). Its function is as follows. NDH-1 shuttles electrons from NAD(P)H, via FMN and iron-sulfur (Fe-S) centers, to quinones in the respiratory chain. The immediate electron acceptor for the enzyme in this species is believed to be plastoquinone. Couples the redox reaction to proton translocation (for every two electrons transferred, four hydrogen ions are translocated across the cytoplasmic membrane), and thus conserves the redox energy in a proton gradient. This Acaryochloris marina (strain MBIC 11017) protein is NAD(P)H-quinone oxidoreductase chain 4.